The chain runs to 1843 residues: Cilia- and flagella-associated protein 44 (1843 aa).

A disordered region spans residues 1–86; sequence MKEPDDQDTS…PPVEVKEEPE (86 aa). Over residues 29–39 the composition is skewed to polar residues; that stretch reads LKSSQDTTADS. Acidic residues predominate over residues 41–58; sequence TDGEESYLGDDLDLDDMD. 7 WD repeats span residues 214–255, 258–297, 308–346, 353–390, 456–495, 497–541, and 561–600; these read GAEK…PILR, AFSQ…TGLK, TSTS…VELC, CHSG…TADV, FHSG…PLVH, KFKQ…GLTV, and PHTD…KPIG. Residues 701–726 are disordered; it reads REAFGEEEIPEEETSEEGEEEEPPLP. The segment covering 705–724 has biased composition (acidic residues); it reads GEEEIPEEETSEEGEEEEPP. WD repeat units follow at residues 790 to 829 and 842 to 881; these read TEDN…PFLV and NNYG…IVPK. Disordered stretches follow at residues 1040-1086, 1266-1291, and 1488-1524; these read YSKL…SVLE, QRKQ…SAGG, and KEVE…DDVF. Positions 1047 to 1071 are enriched in basic and acidic residues; sequence SQSERRQSKMERLEKEGPGKKESQR. The residue at position 1069 (serine 1069) is a Phosphoserine. Residues 1072–1081 show a composition bias toward polar residues; the sequence is DTGGSISLQE. Residues 1492 to 1524 show a composition bias toward acidic residues; it reads GDADEDEESEESSEEESSLESDEDASGSEDDVF. Coiled-coil stretches lie at residues 1548 to 1603 and 1631 to 1665; these read RLDI…RLNE and LVFS…CRER. The stretch at 1699–1744 is one WD 10 repeat; the sequence is IDLEALQTLSVNTTLEELKIKKLRKELSNAKELRMWEEKIAQVRWD.

The protein belongs to the CFAP44 family. Expressed in testis.

It is found in the cell projection. Its subcellular location is the cilium. The protein localises to the flagellum. The protein resides in the cytoplasm. It localises to the cytoskeleton. It is found in the flagellum axoneme. Functionally, flagellar protein involved in sperm flagellum axoneme organization and function. The polypeptide is Cilia- and flagella-associated protein 44 (Mus musculus (Mouse)).